Reading from the N-terminus, the 164-residue chain is Peptidyl-prolyl cis-trans isomerase A-like 4C (164 aa).

Positions 7-163 (FFDITVDGKP…KKITIADCGQ (157 aa)) constitute a PPIase cyclophilin-type domain.

The protein belongs to the cyclophilin-type PPIase family. PPIase A subfamily.

It is found in the cytoplasm. The catalysed reaction is [protein]-peptidylproline (omega=180) = [protein]-peptidylproline (omega=0). In terms of biological role, PPIases accelerate the folding of proteins. It catalyzes the cis-trans isomerization of proline imidic peptide bonds in oligopeptides. The protein is Peptidyl-prolyl cis-trans isomerase A-like 4C of Homo sapiens (Human).